Here is a 175-residue protein sequence, read N- to C-terminus: Protein LpfE (175 aa).

Positions 1-20 (MKNLHALMPACLLLTASAMA) are cleaved as a signal peptide.

The protein belongs to the fimbrial protein family.

The protein localises to the fimbrium. In Salmonella typhimurium (strain LT2 / SGSC1412 / ATCC 700720), this protein is Protein LpfE (lpfE).